Here is a 204-residue protein sequence, read N- to C-terminus: Protease (204 aa).

Active-site residues include histidine 54, aspartate 71, and cysteine 122.

This sequence belongs to the peptidase C5 family. As to quaternary structure, interacts with protease cofactor pVI-C; this interaction is necessary for protease activation.

It is found in the virion. Its subcellular location is the host nucleus. It catalyses the reaction Cleaves proteins of the adenovirus and its host cell at two consensus sites: -Yaa-Xaa-Gly-Gly-|-Xaa- and -Yaa-Xaa-Gly-Xaa-|-Gly- (in which Yaa is Met, Ile or Leu, and Xaa is any amino acid).. With respect to regulation, requires DNA and protease cofactor for maximal activation. Inside nascent virions, becomes partially activated by binding to the viral DNA, allowing it to cleave the cofactor that binds to the protease and fully activates it. Actin, like the viral protease cofactor, seems to act as a cofactor in the cleavage of cytokeratin 18 and of actin itself. Its function is as follows. Cleaves viral precursor proteins (pTP, pIIIa, pVI, pVII, pVIII, and pX) inside newly assembled particles giving rise to mature virions. Protease complexed to its cofactor slides along the viral DNA to specifically locate and cleave the viral precursors. Mature virions have a weakened organization compared to the unmature virions, thereby facilitating subsequent uncoating. Without maturation, the particle lacks infectivity and is unable to uncoat. Late in adenovirus infection, in the cytoplasm, may participate in the cytoskeleton destruction. Cleaves host cell cytoskeletal keratins K7 and K18. This is Protease from Bos taurus (Bovine).